The primary structure comprises 132 residues: Riboflavin kinase (132 aa).

10 to 15 is a CDP binding site; that stretch reads GLGEGR. Mg(2+)-binding residues include T39 and N41. FMN contacts are provided by T95, Y96, and E103. 108 to 111 serves as a coordination point for CDP; it reads MKLR.

In terms of assembly, monomer. Requires Mg(2+) as cofactor.

The catalysed reaction is riboflavin + CTP = CDP + FMN + H(+). It functions in the pathway cofactor biosynthesis; FMN biosynthesis; FMN from riboflavin (CTP route): step 1/1. Catalyzes the CTP-dependent phosphorylation of riboflavin (vitamin B2) to form flavin mononucleotide (FMN). Can also utilize UTP as the phosphate donor, although less efficiently, and it is unclear if ATP and GTP can also serve as substrates or not. This chain is Riboflavin kinase (ribK), found in Methanocaldococcus jannaschii (strain ATCC 43067 / DSM 2661 / JAL-1 / JCM 10045 / NBRC 100440) (Methanococcus jannaschii).